We begin with the raw amino-acid sequence, 284 residues long: Pantothenate synthetase (284 aa).

Position 32–39 (Met-32–His-39) interacts with ATP. Catalysis depends on His-39, which acts as the Proton donor. Residue Gln-63 coordinates (R)-pantoate. Residue Gln-63 coordinates beta-alanine. Gly-149–Asp-152 serves as a coordination point for ATP. Gln-155 serves as a coordination point for (R)-pantoate. ATP-binding positions include Val-178 and Leu-186–Arg-189.

This sequence belongs to the pantothenate synthetase family. In terms of assembly, homodimer.

The protein resides in the cytoplasm. It carries out the reaction (R)-pantoate + beta-alanine + ATP = (R)-pantothenate + AMP + diphosphate + H(+). The protein operates within cofactor biosynthesis; (R)-pantothenate biosynthesis; (R)-pantothenate from (R)-pantoate and beta-alanine: step 1/1. Catalyzes the condensation of pantoate with beta-alanine in an ATP-dependent reaction via a pantoyl-adenylate intermediate. This is Pantothenate synthetase from Chelativorans sp. (strain BNC1).